Consider the following 25-residue polypeptide: Ocellatin-1 (25 aa).

A Valine amide modification is found at Val-25.

As to expression, expressed by the skin dorsal glands.

The protein resides in the secreted. Its function is as follows. Has hemolytic activity against human erythrocytes and antibacterial activity against the Gram-negative bacterium E.coli. This is Ocellatin-1 from Leptodactylus ocellatus (Argus frog).